Consider the following 141-residue polypeptide: MDVRTLLETTLSGLGYELVDFELGHGGLMRVFIDAPAGIALDDCVKVSNHLTRLFTVENIDYDRLEVSSPGLDRPLTREADYARFAGERVRIKTRLPIGERKKFAGTLVGLADGQVELDIDGERVAIPLASIDKARLDPQF.

This sequence belongs to the RimP family.

The protein localises to the cytoplasm. Functionally, required for maturation of 30S ribosomal subunits. In Laribacter hongkongensis (strain HLHK9), this protein is Ribosome maturation factor RimP.